A 239-amino-acid chain; its full sequence is MAEINRMQYEREYTEGISQSMRVPEKLKVAPSNSGVDPKTQPDMPIPGVFMEVPERIVIAGHSEESLFSRPSNLDFIPGANIAALALKTPPRVLTLSERPLDFLDLEGPAPATPHSKEVRSSGHLKRDGLASENSLRQNGQLVRHDSMPILRCGSSTSVPVTHHDNPRSAMSTLDTTLDSTPDDLALADAASLRRQIIKLNRRLLLLEEENKERVKHEMTMYSIIIIFGLLNSWLWFRR.

Residues 1–219 (MAEINRMQYE…ENKERVKHEM (219 aa)) lie on the Cytoplasmic side of the membrane. Positions 107 to 139 (EGPAPATPHSKEVRSSGHLKRDGLASENSLRQN) are disordered. Basic and acidic residues predominate over residues 115 to 130 (HSKEVRSSGHLKRDGL). Residues 184-214 (DLALADAASLRRQIIKLNRRLLLLEEENKER) are a coiled coil. The chain crosses the membrane as a helical; Anchor for type IV membrane protein span at residues 220 to 237 (TMYSIIIIFGLLNSWLWF). At 238–239 (RR) the chain is on the extracellular side.

The protein belongs to the Tango11 family.

The protein localises to the mitochondrion outer membrane. It is found in the peroxisome. Its function is as follows. Plays a role in mitochondrial and peroxisomal fission. Promotes the recruitment and association of the fission mediator dynamin-related protein 1 (DNM1L) to the mitochondrial surface. The polypeptide is Mitochondrial fission factor homolog B (mff-b) (Xenopus laevis (African clawed frog)).